The sequence spans 37 residues: VGINVKCKHSGQCLKPCKDAGMRFGKCMNGKCDCTPK.

3 cysteine pairs are disulfide-bonded: cysteine 7–cysteine 27, cysteine 13–cysteine 32, and cysteine 17–cysteine 34. Lysine 37 bears the Lysine amide mark.

It belongs to the short scorpion toxin superfamily. Potassium channel inhibitor family. Alpha-KTx 03 subfamily. Expressed by the venom gland.

It localises to the secreted. Its function is as follows. Blocks voltage-gated potassium channels Kv1.1/KCNA1 (IC(50)=203.15 pM), Kv1.2/KCNA2 (IC(50)=8.92 nM) from rat and human Kv1.3 KCNA3/KCNA3 (IC(50)=171 pM) potently. At 2 uM, also blocks Shaker IR and has a moderate effect on rat Kv1.6/KCNA6. This is Potassium channel toxin alpha-KTx 3.13 from Mesobuthus eupeus (Lesser Asian scorpion).